Consider the following 330-residue polypeptide: Holliday junction branch migration complex subunit RuvB (330 aa).

Residues M1 to Y181 are large ATPase domain (RuvB-L). ATP contacts are provided by residues L20, R21, G62, K65, T66, T67, E128–Y130, R171, Y181, and R218. T66 is a Mg(2+) binding site. Residues S182 to E252 are small ATPAse domain (RuvB-S). The interval E255 to E330 is head domain (RuvB-H). Positions 310 and 315 each coordinate DNA.

Belongs to the RuvB family. Homohexamer. Forms an RuvA(8)-RuvB(12)-Holliday junction (HJ) complex. HJ DNA is sandwiched between 2 RuvA tetramers; dsDNA enters through RuvA and exits via RuvB. An RuvB hexamer assembles on each DNA strand where it exits the tetramer. Each RuvB hexamer is contacted by two RuvA subunits (via domain III) on 2 adjacent RuvB subunits; this complex drives branch migration. In the full resolvosome a probable DNA-RuvA(4)-RuvB(12)-RuvC(2) complex forms which resolves the HJ.

The protein resides in the cytoplasm. The catalysed reaction is ATP + H2O = ADP + phosphate + H(+). Functionally, the RuvA-RuvB-RuvC complex processes Holliday junction (HJ) DNA during genetic recombination and DNA repair, while the RuvA-RuvB complex plays an important role in the rescue of blocked DNA replication forks via replication fork reversal (RFR). RuvA specifically binds to HJ cruciform DNA, conferring on it an open structure. The RuvB hexamer acts as an ATP-dependent pump, pulling dsDNA into and through the RuvAB complex. RuvB forms 2 homohexamers on either side of HJ DNA bound by 1 or 2 RuvA tetramers; 4 subunits per hexamer contact DNA at a time. Coordinated motions by a converter formed by DNA-disengaged RuvB subunits stimulates ATP hydrolysis and nucleotide exchange. Immobilization of the converter enables RuvB to convert the ATP-contained energy into a lever motion, pulling 2 nucleotides of DNA out of the RuvA tetramer per ATP hydrolyzed, thus driving DNA branch migration. The RuvB motors rotate together with the DNA substrate, which together with the progressing nucleotide cycle form the mechanistic basis for DNA recombination by continuous HJ branch migration. Branch migration allows RuvC to scan DNA until it finds its consensus sequence, where it cleaves and resolves cruciform DNA. The protein is Holliday junction branch migration complex subunit RuvB of Acetivibrio thermocellus (strain ATCC 27405 / DSM 1237 / JCM 9322 / NBRC 103400 / NCIMB 10682 / NRRL B-4536 / VPI 7372) (Clostridium thermocellum).